Reading from the N-terminus, the 517-residue chain is Putative thymidine phosphorylase (517 aa).

It belongs to the thymidine/pyrimidine-nucleoside phosphorylase family. Type 2 subfamily.

The catalysed reaction is thymidine + phosphate = 2-deoxy-alpha-D-ribose 1-phosphate + thymine. This Legionella pneumophila (strain Corby) protein is Putative thymidine phosphorylase.